The sequence spans 946 residues: Translation initiation factor IF-2 (946 aa).

2 disordered regions span residues 58 to 250 and 301 to 324; these read AERK…AVVI and VSRD…KSLS. Low complexity-rich tracts occupy residues 102-165 and 174-185; these read EPPQ…QPAA and AQPSAPQPAAAQ. Residues 186 to 211 are compositionally biased toward pro residues; that stretch reads PRPPQPPMPSRPPPAGYRPAPPPGAR. Residues 212–229 show a composition bias toward low complexity; that stretch reads PPMSAAPGAPAQPGAAAQ. One can recognise a tr-type G domain in the interval 445 to 614; sequence IRPPVVTVMG…ALQSEVLELK (170 aa). The G1 stretch occupies residues 454–461; it reads GHVDHGKT. 454–461 serves as a coordination point for GTP; sequence GHVDHGKT. Residues 479–483 are G2; the sequence is GITQH. The interval 500–503 is G3; that stretch reads DTPG. GTP is bound by residues 500-504 and 554-557; these read DTPGH and NKVD. The segment at 554-557 is G4; the sequence is NKVD. The segment at 590–592 is G5; sequence SAR.

It belongs to the TRAFAC class translation factor GTPase superfamily. Classic translation factor GTPase family. IF-2 subfamily.

It is found in the cytoplasm. In terms of biological role, one of the essential components for the initiation of protein synthesis. Protects formylmethionyl-tRNA from spontaneous hydrolysis and promotes its binding to the 30S ribosomal subunits. Also involved in the hydrolysis of GTP during the formation of the 70S ribosomal complex. The polypeptide is Translation initiation factor IF-2 (Anaeromyxobacter sp. (strain K)).